The chain runs to 492 residues: NADH-quinone oxidoreductase subunit N (492 aa).

14 helical membrane-spanning segments follow: residues 12 to 32 (LLPY…MIAI), 44 to 64 (ISVV…AGII), 76 to 96 (LFVI…CALA), 115 to 135 (LYLL…AQHL), 138 to 158 (FFMS…YTYM), 169 to 189 (YLVL…FIYA), 212 to 232 (LILG…AAPF), 244 to 264 (PAPI…ALAV), 272 to 292 (LLAL…SILL), 306 to 326 (LLGY…VSIG), 334 to 354 (SMYM…VTLM), 381 to 401 (TAVM…AGFI), 416 to 438 (WFLA…RVLL), and 463 to 483 (IMVI…NSMI).

The protein belongs to the complex I subunit 2 family. In terms of assembly, NDH-1 is composed of 14 different subunits. Subunits NuoA, H, J, K, L, M, N constitute the membrane sector of the complex.

It localises to the cell inner membrane. The catalysed reaction is a quinone + NADH + 5 H(+)(in) = a quinol + NAD(+) + 4 H(+)(out). Its function is as follows. NDH-1 shuttles electrons from NADH, via FMN and iron-sulfur (Fe-S) centers, to quinones in the respiratory chain. The immediate electron acceptor for the enzyme in this species is believed to be ubiquinone. Couples the redox reaction to proton translocation (for every two electrons transferred, four hydrogen ions are translocated across the cytoplasmic membrane), and thus conserves the redox energy in a proton gradient. This is NADH-quinone oxidoreductase subunit N from Psychrobacter arcticus (strain DSM 17307 / VKM B-2377 / 273-4).